The sequence spans 341 residues: MSEQESDEVKRMKQLEEARKRVEELKKKKNKKNKGKKNKNSSATGSIGSETPDLEGTPGEESTQEETVKANSTKSENNDQNDVDEESEEKEIEQVKSDPSGTTEKDIEEINSTSSNVGKDDAENTKKEEVQEVIKNNNDEQTADAGKTIEPQEEKKIVQTQEGNEPSNTSEAADDLFANDGNEESDFLTTIKKQKEEDELTKLRAENEKLTQENKQLKFLNMENETTVDDLQDQLQEKEDIINGLQNDLQTARDELIAAVEKLKLAEAKAARNTTATPIQFADFNTSSNNLTPSQSVTNSGTQVAHGNNMEVDRVMLNKWRQWNVDMTTWRSIGSGPIMEF.

The segment at 1-181 (MSEQESDEVK…AADDLFANDG (181 aa)) is disordered. Residue Ser-2 is modified to N-acetylserine. A coiled-coil region spans residues 2 to 41 (SEQESDEVKRMKQLEEARKRVEELKKKKNKKNKGKKNKNS). Residues 7–26 (DEVKRMKQLEEARKRVEELK) show a composition bias toward basic and acidic residues. Over residues 27-39 (KKKNKKNKGKKNK) the composition is skewed to basic residues. Polar residues predominate over residues 69-78 (KANSTKSENN). Over residues 79–91 (DQNDVDEESEEKE) the composition is skewed to acidic residues. Position 87 is a phosphoserine (Ser-87). The span at 118 to 132 (GKDDAENTKKEEVQE) shows a compositional bias: basic and acidic residues. Residues 158-171 (VQTQEGNEPSNTSE) show a composition bias toward polar residues. Ser-170 bears the Phosphoserine mark. Residues 188–272 (LTTIKKQKEE…LKLAEAKAAR (85 aa)) adopt a coiled-coil conformation. Thr-292 is modified (phosphothreonine).

In terms of assembly, interacts with GRH1 (via C-terminus), probably forming a heterooligomer consisting of a GRH1 dimer and a BUG1 dimer.

Its subcellular location is the cytoplasm. The protein resides in the golgi apparatus. It is found in the cis-Golgi network membrane. In terms of biological role, involved in ER to Golgi vesicle-mediated transport by either facilitating USO1-dependent and -independent tethering or increasing target accuracy of fusion events of COPII-coated vesicles. This chain is Binder of USO1 and GRH1 protein 1, found in Saccharomyces cerevisiae (strain ATCC 204508 / S288c) (Baker's yeast).